A 1015-amino-acid chain; its full sequence is DNA polymerase catalytic subunit (1015 aa).

Belongs to the DNA polymerase type-B family. Forms a complex with the ssDNA-binding protein BALF2, the DNA polymerase processivity factor BMRF1, and the alkaline exonuclease BGLF5. Interacts with the putative helicase-primase complex composed of BBLF4, BSLF1 and BBLF2/3 proteins; these interactions may coordinate leading and lagging strand DNA synthesis at the replication fork.

The protein resides in the host nucleus. It carries out the reaction DNA(n) + a 2'-deoxyribonucleoside 5'-triphosphate = DNA(n+1) + diphosphate. Functionally, replicates viral genomic DNA in the late phase of lytic infection, producing long concatemeric DNA. The replication complex is composed of six viral proteins: the DNA polymerase, processivity factor, primase, primase-associated factor, helicase, and ssDNA-binding protein. In Epstein-Barr virus (strain B95-8) (HHV-4), this protein is DNA polymerase catalytic subunit.